The primary structure comprises 317 residues: Aspartate carbamoyltransferase catalytic subunit (317 aa).

2 residues coordinate carbamoyl phosphate: Arg-66 and Thr-67. Lys-94 lines the L-aspartate pocket. Carbamoyl phosphate-binding residues include Arg-116, His-144, and Gln-147. Residues Arg-177 and Arg-231 each coordinate L-aspartate. Carbamoyl phosphate contacts are provided by Gly-272 and Pro-273.

Belongs to the aspartate/ornithine carbamoyltransferase superfamily. ATCase family. Heterododecamer (2C3:3R2) of six catalytic PyrB chains organized as two trimers (C3), and six regulatory PyrI chains organized as three dimers (R2).

It carries out the reaction carbamoyl phosphate + L-aspartate = N-carbamoyl-L-aspartate + phosphate + H(+). It participates in pyrimidine metabolism; UMP biosynthesis via de novo pathway; (S)-dihydroorotate from bicarbonate: step 2/3. Catalyzes the condensation of carbamoyl phosphate and aspartate to form carbamoyl aspartate and inorganic phosphate, the committed step in the de novo pyrimidine nucleotide biosynthesis pathway. The polypeptide is Aspartate carbamoyltransferase catalytic subunit (Rhodopseudomonas palustris (strain HaA2)).